The chain runs to 778 residues: Serine/threonine-protein kinase BRSK1 (778 aa).

Residues 1 to 12 (MSSGAKEGGGGS) are compositionally biased toward gly residues. Positions 1 to 29 (MSSGAKEGGGGSPAYHLPHPHPHPPQHAQ) are disordered. The 252-residue stretch at 34–285 (YRLEKTLGKG…LEQIQKHPWY (252 aa)) folds into the Protein kinase domain. Residues 40 to 48 (LGKGQTGLV) and K63 contribute to the ATP site. The active-site Proton acceptor is D156. Position 189 is a phosphothreonine; by LKB1 (T189). One can recognise a UBA domain in the interval 314–356 (ELDPDVLESMASLGCFRDRERLHRELRSEEENQEKMIYYLLLD). A compositionally biased stretch (basic and acidic residues) spans 362-383 (PSCEDQDLPPRNDVDPPRKRVD). The tract at residues 362–548 (PSCEDQDLPP…SPGGGVGGAA (187 aa)) is disordered. 4 positions are modified to phosphoserine: S399, S443, S447, and S450. Over residues 430–457 (SRSVSGASTGLSSSPLSSPRSPVFSFSP) the composition is skewed to low complexity. Residues R466, R481, R484, and R498 each carry the omega-N-methylarginine modification. Residues 491-508 (QPPPPSARSTPLPGPPGS) show a composition bias toward pro residues. At S508 the chain carries Phosphoserine. The segment covering 509–533 (PRSSGGTPLHSPLHTPRASPTGTPG) has biased composition (low complexity). R525 is modified (omega-N-methylarginine). Phosphothreonine is present on residues T529 and T535. R550 carries the post-translational modification Omega-N-methylarginine. T583 is subject to Phosphothreonine. 3 positions are modified to phosphoserine: S586, S587, and S601. Positions 719 to 778 (QPSVQALADEKNGAQTRPAGAPPRSLQPPPGRPDPELSSSPRRGPPKDKKLLATNGTPLP) are disordered.

The protein belongs to the protein kinase superfamily. CAMK Ser/Thr protein kinase family. SNF1 subfamily. Mg(2+) serves as cofactor. Post-translationally, phosphorylated at Thr-189 by STK11/LKB1 in complex with STE20-related adapter-alpha (STRADA) pseudo kinase and CAB39. Not phosphorylated at Thr-189 by CaMKK2. In contrast, it is phosphorylated and activated by CaMKK1. May be inactivated via dephosphorylation of Thr-189 by PP2C. In terms of tissue distribution, widely expressed, with highest levels in brain and testis. Protein levels remain constant throughout the cell cycle.

Its subcellular location is the cytoplasm. The protein localises to the nucleus. The protein resides in the cytoskeleton. It is found in the microtubule organizing center. It localises to the centrosome. Its subcellular location is the synapse. The protein localises to the presynaptic active zone. The protein resides in the cytoplasmic vesicle. It is found in the secretory vesicle. It localises to the synaptic vesicle. The catalysed reaction is L-seryl-[protein] + ATP = O-phospho-L-seryl-[protein] + ADP + H(+). It catalyses the reaction L-threonyl-[protein] + ATP = O-phospho-L-threonyl-[protein] + ADP + H(+). It carries out the reaction L-seryl-[tau protein] + ATP = O-phospho-L-seryl-[tau protein] + ADP + H(+). The enzyme catalyses L-threonyl-[tau protein] + ATP = O-phospho-L-threonyl-[tau protein] + ADP + H(+). Activated by phosphorylation on Thr-189 by STK11/LKB1. Its function is as follows. Serine/threonine-protein kinase that plays a key role in polarization of neurons and centrosome duplication. Phosphorylates CDC25B, CDC25C, MAPT/TAU, RIMS1, TUBG1, TUBG2 and WEE1. Following phosphorylation and activation by STK11/LKB1, acts as a key regulator of polarization of cortical neurons, probably by mediating phosphorylation of microtubule-associated proteins such as MAPT/TAU at 'Thr-529' and 'Ser-579'. Also regulates neuron polarization by mediating phosphorylation of WEE1 at 'Ser-642' in postmitotic neurons, leading to down-regulate WEE1 activity in polarized neurons. In neurons, localizes to synaptic vesicles and plays a role in neurotransmitter release, possibly by phosphorylating RIMS1. Also acts as a positive regulator of centrosome duplication by mediating phosphorylation of gamma-tubulin (TUBG1 and TUBG2) at 'Ser-131', leading to translocation of gamma-tubulin and its associated proteins to the centrosome. Involved in the UV-induced DNA damage checkpoint response, probably by inhibiting CDK1 activity through phosphorylation and activation of WEE1, and inhibition of CDC25B and CDC25C. This is Serine/threonine-protein kinase BRSK1 (BRSK1) from Homo sapiens (Human).